The chain runs to 436 residues: Ribosomal protein uS12 methylthiotransferase RimO (436 aa).

Residues K4 to H122 form the MTTase N-terminal domain. Positions 13, 51, 85, 146, 150, and 153 each coordinate [4Fe-4S] cluster. The Radical SAM core domain maps to T132 to E363. The TRAM domain occupies A366–N433.

This sequence belongs to the methylthiotransferase family. RimO subfamily. Requires [4Fe-4S] cluster as cofactor.

It localises to the cytoplasm. The catalysed reaction is L-aspartate(89)-[ribosomal protein uS12]-hydrogen + (sulfur carrier)-SH + AH2 + 2 S-adenosyl-L-methionine = 3-methylsulfanyl-L-aspartate(89)-[ribosomal protein uS12]-hydrogen + (sulfur carrier)-H + 5'-deoxyadenosine + L-methionine + A + S-adenosyl-L-homocysteine + 2 H(+). Catalyzes the methylthiolation of an aspartic acid residue of ribosomal protein uS12. The sequence is that of Ribosomal protein uS12 methylthiotransferase RimO from Bacteroides thetaiotaomicron (strain ATCC 29148 / DSM 2079 / JCM 5827 / CCUG 10774 / NCTC 10582 / VPI-5482 / E50).